The following is a 110-amino-acid chain: Nucleoid-associated protein NFA_2940 (110 aa).

This sequence belongs to the YbaB/EbfC family. As to quaternary structure, homodimer.

The protein localises to the cytoplasm. It is found in the nucleoid. Binds to DNA and alters its conformation. May be involved in regulation of gene expression, nucleoid organization and DNA protection. This Nocardia farcinica (strain IFM 10152) protein is Nucleoid-associated protein NFA_2940.